Here is a 518-residue protein sequence, read N- to C-terminus: Anthranilate synthase component 1 (518 aa).

Residues serine 41 and 291 to 293 (PYM) contribute to the L-tryptophan site. Chorismate is bound at residue 328-329 (GS). Mg(2+) is bound at residue glutamate 361. Chorismate is bound by residues tyrosine 449, arginine 469, 483 to 485 (GCG), and glycine 485. Glutamate 498 serves as a coordination point for Mg(2+).

The protein belongs to the anthranilate synthase component I family. As to quaternary structure, heterotetramer consisting of two non-identical subunits: a beta subunit (TrpG) and a large alpha subunit (TrpE). Mg(2+) is required as a cofactor.

The enzyme catalyses chorismate + L-glutamine = anthranilate + pyruvate + L-glutamate + H(+). It participates in amino-acid biosynthesis; L-tryptophan biosynthesis; L-tryptophan from chorismate: step 1/5. With respect to regulation, feedback inhibited by tryptophan. Its function is as follows. Part of a heterotetrameric complex that catalyzes the two-step biosynthesis of anthranilate, an intermediate in the biosynthesis of L-tryptophan. In the first step, the glutamine-binding beta subunit (TrpG) of anthranilate synthase (AS) provides the glutamine amidotransferase activity which generates ammonia as a substrate that, along with chorismate, is used in the second step, catalyzed by the large alpha subunit of AS (TrpE) to produce anthranilate. In the absence of TrpG, TrpE can synthesize anthranilate directly from chorismate and high concentrations of ammonia. This is Anthranilate synthase component 1 (trpE) from Haemophilus influenzae (strain ATCC 51907 / DSM 11121 / KW20 / Rd).